A 97-amino-acid polypeptide reads, in one-letter code: Protein Vpr (97 aa).

Positions 1–42 are homooligomerization; it reads MEQAPEDQGPQREPYNEWTLELLEELKREAVRHFPRPWLHSL. Phosphoserine; by host is present on residues Ser-79, Ser-95, and Ser-97.

Belongs to the HIV-1 VPR protein family. As to quaternary structure, homooligomer, may form homodimer. Interacts with p6-gag region of the Pr55 Gag precursor protein through a (Leu-X-X)4 motif near the C-terminus of the P6gag protein. Interacts with host UNG. May interact with host RAD23A/HHR23A. Interacts with host VPRBP/DCAF1, leading to hijack the CUL4A-RBX1-DDB1-DCAF1/VPRBP complex, mediating ubiquitination of host proteins such as TERT and ZGPAT and arrest of the cell cycle in G2 phase. Post-translationally, phosphorylated on several residues by host. These phosphorylations regulate VPR activity for the nuclear import of the HIV-1 pre-integration complex.

Its subcellular location is the virion. It localises to the host nucleus. It is found in the host extracellular space. Functionally, during virus replication, may deplete host UNG protein, and incude G2-M cell cycle arrest. Acts by targeting specific host proteins for degradation by the 26S proteasome, through association with the cellular CUL4A-DDB1 E3 ligase complex by direct interaction with host VPRPB/DCAF-1. Cell cycle arrest reportedly occurs within hours of infection and is not blocked by antiviral agents, suggesting that it is initiated by the VPR carried into the virion. Additionally, VPR induces apoptosis in a cell cycle dependent manner suggesting that these two effects are mechanistically linked. Detected in the serum and cerebrospinal fluid of AIDS patient, VPR may also induce cell death to bystander cells. Its function is as follows. During virus entry, plays a role in the transport of the viral pre-integration (PIC) complex to the host nucleus. This function is crucial for viral infection of non-dividing macrophages. May act directly at the nuclear pore complex, by binding nucleoporins phenylalanine-glycine (FG)-repeat regions. The polypeptide is Protein Vpr (Human immunodeficiency virus type 1 group M subtype B (isolate ARV2/SF2) (HIV-1)).